The chain runs to 154 residues: Transcription antitermination protein NusB (154 aa).

Belongs to the NusB family.

Its function is as follows. Involved in transcription antitermination. Required for transcription of ribosomal RNA (rRNA) genes. Binds specifically to the boxA antiterminator sequence of the ribosomal RNA (rrn) operons. This Methylobacillus flagellatus (strain ATCC 51484 / DSM 6875 / VKM B-1610 / KT) protein is Transcription antitermination protein NusB.